A 537-amino-acid polypeptide reads, in one-letter code: Apolipoprotein N-acyltransferase (537 aa).

The next 6 membrane-spanning stretches (helical) occupy residues 10-30 (IALA…ITAG), 37-57 (LAPF…VWLI), 76-96 (YWFG…AFFV), 107-127 (FAVL…FALA), 181-201 (IGLW…ATLI), and 210-230 (AWRA…FGAI). In terms of domain architecture, CN hydrolase spans 248 to 501 (MQPNLQQDAK…EGILDASLPA (254 aa)). Glu295 functions as the Proton acceptor in the catalytic mechanism. Residue Lys360 is part of the active site. The Nucleophile role is filled by Cys413. Residues 507 to 527 (IYARVGDVPAAVLVALAVLLA) form a helical membrane-spanning segment.

This sequence belongs to the CN hydrolase family. Apolipoprotein N-acyltransferase subfamily.

It is found in the cell inner membrane. The enzyme catalyses N-terminal S-1,2-diacyl-sn-glyceryl-L-cysteinyl-[lipoprotein] + a glycerophospholipid = N-acyl-S-1,2-diacyl-sn-glyceryl-L-cysteinyl-[lipoprotein] + a 2-acyl-sn-glycero-3-phospholipid + H(+). It participates in protein modification; lipoprotein biosynthesis (N-acyl transfer). In terms of biological role, catalyzes the phospholipid dependent N-acylation of the N-terminal cysteine of apolipoprotein, the last step in lipoprotein maturation. The chain is Apolipoprotein N-acyltransferase from Bradyrhizobium diazoefficiens (strain JCM 10833 / BCRC 13528 / IAM 13628 / NBRC 14792 / USDA 110).